The sequence spans 61 residues: ATP synthase subunit J, mitochondrial (61 aa).

Residues 13 to 32 (LVKYYWPFFVGFGLTFYGVA) form a helical membrane-spanning segment.

As to quaternary structure, F-type ATP synthases have 2 components, the catalytic core F(1) and the membrane-embedded component F(0), linked together by a central stalk and a peripheral stalk. The central stalk, also called rotor shaft, is often seen as part of F(1). The peripheral stalk is seen as part of F(0). F(0) contains the membrane channel next to the rotor. F-type ATP synthases form dimers but each monomer functions independently in ATP generation. The dimer consists of 18 different polypeptides: ATP1 (subunit alpha, part of F(1), 3 molecules per monomer), ATP2 (subunit beta, part of F(1), 3 molecules per monomer), ATP3 (subunit gamma, part of the central stalk), ATP4 (subunit b, part of the peripheral stalk), ATP5/OSCP (subunit 5/OSCP, part of the peripheral stalk), ATP6 (subunit a, part of the peripheral stalk), ATP7 (subunit d, part of the peripheral stalk), ATP8 (subunit 8, part of the peripheral stalk), OLI1 (subunit c, part of the rotor, 10 molecules per monomer), ATP14 (subunit h, part of the peripheral stalk), ATP15 (subunit epsilon, part of the central stalk), ATP16 (subunit delta, part of the central stalk), ATP17 (subunit f, part of the peripheral stalk), ATP18 (subunit i/j, part of the peripheral stalk). Dimer-specific subunits are ATP19 (subunit k, at interface between monomers), ATP20 (subunit g, at interface between monomers), TIM11 (subunit e, at interface between monomers). Also contains subunit L.

It localises to the mitochondrion inner membrane. Mitochondrial membrane ATP synthase (F(1)F(0) ATP synthase or Complex V) produces ATP from ADP in the presence of a proton gradient across the membrane which is generated by electron transport complexes of the respiratory chain. F-type ATP synthases consist of two structural domains, F(1) - containing the extramembraneous catalytic core, and F(0) - containing the membrane proton channel, linked together by a central stalk and a peripheral stalk. During catalysis, ATP synthesis in the catalytic domain of F(1) is coupled via a rotary mechanism of the central stalk subunits to proton translocation. Part of the complex F(0) domain. Minor subunit located with subunit a/ATP6 in the membrane. This Pichia angusta (Yeast) protein is ATP synthase subunit J, mitochondrial.